We begin with the raw amino-acid sequence, 23 residues long: Brevinin-1Eb (23 aa).

A disulfide bridge connects residues Cys-17 and Cys-23.

This sequence belongs to the frog skin active peptide (FSAP) family. Brevinin subfamily. In terms of tissue distribution, expressed by the skin glands.

It is found in the secreted. Shows antibacterial activity against representative Gram-negative and Gram-positive bacterial species, and a very high hemolytic activity. This is Brevinin-1Eb from Pelophylax lessonae (Pool frog).